The chain runs to 195 residues: Transcriptional regulator LdrP (195 aa).

The 73-residue stretch at 110–182 folds into the HTH crp-type domain; the sequence is GELRARIARY…YRRVYLLDLA (73 aa). The H-T-H motif DNA-binding region spans 142–161; that stretch reads HEEIADATASIRESVSKVLA.

In terms of biological role, activates transcription. Positively regulates PcrtB promoter upstream of the crtB operon in a cAMP-independent manner. Regulated genes include genes encoding DNA photolyase, phytoene synthase and cytochrome P450 monooxygenase, which are involved in carotenoid biosynthesis. Positively regulates the light-inducible gene cluster in the megaplasmid in a cAMP-independent manner. This chain is Transcriptional regulator LdrP, found in Thermus thermophilus (strain ATCC BAA-163 / DSM 7039 / HB27).